Consider the following 278-residue polypeptide: 4-diphosphocytidyl-2-C-methyl-D-erythritol kinase (278 aa).

Lys-10 is an active-site residue. 93-103 contributes to the ATP binding site; that stretch reads PMGGGLGGGSS. Residue Asp-135 is part of the active site.

Belongs to the GHMP kinase family. IspE subfamily.

The catalysed reaction is 4-CDP-2-C-methyl-D-erythritol + ATP = 4-CDP-2-C-methyl-D-erythritol 2-phosphate + ADP + H(+). The protein operates within isoprenoid biosynthesis; isopentenyl diphosphate biosynthesis via DXP pathway; isopentenyl diphosphate from 1-deoxy-D-xylulose 5-phosphate: step 3/6. Functionally, catalyzes the phosphorylation of the position 2 hydroxy group of 4-diphosphocytidyl-2C-methyl-D-erythritol. The sequence is that of 4-diphosphocytidyl-2-C-methyl-D-erythritol kinase from Thiobacillus denitrificans (strain ATCC 25259 / T1).